The chain runs to 485 residues: Glutamyl-tRNA(Gln) amidotransferase subunit A (485 aa).

Residues Lys-78 and Ser-153 each act as charge relay system in the active site. Residue Ser-177 is the Acyl-ester intermediate of the active site.

The protein belongs to the amidase family. GatA subfamily. Heterotrimer of A, B and C subunits.

The enzyme catalyses L-glutamyl-tRNA(Gln) + L-glutamine + ATP + H2O = L-glutaminyl-tRNA(Gln) + L-glutamate + ADP + phosphate + H(+). Its function is as follows. Allows the formation of correctly charged Gln-tRNA(Gln) through the transamidation of misacylated Glu-tRNA(Gln) in organisms which lack glutaminyl-tRNA synthetase. The reaction takes place in the presence of glutamine and ATP through an activated gamma-phospho-Glu-tRNA(Gln). This is Glutamyl-tRNA(Gln) amidotransferase subunit A from Bacillus anthracis (strain A0248).